We begin with the raw amino-acid sequence, 149 residues long: D-aminoacyl-tRNA deacylase (149 aa).

The Gly-cisPro motif, important for rejection of L-amino acids signature appears at 137–138 (GP).

It belongs to the DTD family. Homodimer.

It is found in the cytoplasm. It carries out the reaction glycyl-tRNA(Ala) + H2O = tRNA(Ala) + glycine + H(+). It catalyses the reaction a D-aminoacyl-tRNA + H2O = a tRNA + a D-alpha-amino acid + H(+). Functionally, an aminoacyl-tRNA editing enzyme that deacylates mischarged D-aminoacyl-tRNAs. Also deacylates mischarged glycyl-tRNA(Ala), protecting cells against glycine mischarging by AlaRS. Acts via tRNA-based rather than protein-based catalysis; rejects L-amino acids rather than detecting D-amino acids in the active site. By recycling D-aminoacyl-tRNA to D-amino acids and free tRNA molecules, this enzyme counteracts the toxicity associated with the formation of D-aminoacyl-tRNA entities in vivo and helps enforce protein L-homochirality. This is D-aminoacyl-tRNA deacylase from Clostridium botulinum (strain ATCC 19397 / Type A).